Consider the following 282-residue polypeptide: 4-diphosphocytidyl-2-C-methyl-D-erythritol kinase (282 aa).

Lys12 is an active-site residue. 95–105 (PMGGGIGGGSS) contacts ATP. The active site involves Asp137.

It belongs to the GHMP kinase family. IspE subfamily.

It carries out the reaction 4-CDP-2-C-methyl-D-erythritol + ATP = 4-CDP-2-C-methyl-D-erythritol 2-phosphate + ADP + H(+). It functions in the pathway isoprenoid biosynthesis; isopentenyl diphosphate biosynthesis via DXP pathway; isopentenyl diphosphate from 1-deoxy-D-xylulose 5-phosphate: step 3/6. Functionally, catalyzes the phosphorylation of the position 2 hydroxy group of 4-diphosphocytidyl-2C-methyl-D-erythritol. In Pseudomonas paraeruginosa (strain DSM 24068 / PA7) (Pseudomonas aeruginosa (strain PA7)), this protein is 4-diphosphocytidyl-2-C-methyl-D-erythritol kinase.